A 77-amino-acid polypeptide reads, in one-letter code: Small ribosomal subunit protein bS18 (77 aa).

This sequence belongs to the bacterial ribosomal protein bS18 family. In terms of assembly, part of the 30S ribosomal subunit. Forms a tight heterodimer with protein bS6.

In terms of biological role, binds as a heterodimer with protein bS6 to the central domain of the 16S rRNA, where it helps stabilize the platform of the 30S subunit. The polypeptide is Small ribosomal subunit protein bS18 (Bacillus cytotoxicus (strain DSM 22905 / CIP 110041 / 391-98 / NVH 391-98)).